Consider the following 85-residue polypeptide: MAGDDSISTLGMILGVGLSLLLVSILGYSLAKWYQRGYCWDGPNFVFNLYQIRNLKDLEVGPPFTISGHMSSPDGGYMKFSNDRV.

Residues 7-27 (ISTLGMILGVGLSLLLVSILG) form a helical membrane-spanning segment.

It is found in the membrane. This is Small integral membrane protein 35 from Mus musculus (Mouse).